The primary structure comprises 305 residues: MKQLQVLLVAGTHGNEINGIWLFDEWKKSSFLINTHGIKTFKVIGNPEAKKAGKRYIHHDLNRSFKEESFIKINPLNCERTRASELVNLYGEAGENPCQIALDFHTTTASMGSCIVVYGRRDADLALASLIQNQLGLPVYLHESDQKQTGFLVESWPCGLVVEIGPIGQGLLNSRIISQTKLILETLMEQIHEVKNLNLFFPNKLIIHRHIKSIDFPRDEEGNIDGYVHSLRQSKDWQELKKNDELFCKLNGEIIRFEEDEPYIPVFINEAAYVEKNIAMSFTKRELWNFKKEWKQALIDLIHQK.

Residues histidine 13 and glutamate 16 each contribute to the Zn(2+) site. Substrate contacts are provided by residues arginine 55 and 62-63 (NR). A Zn(2+)-binding site is contributed by histidine 105. Residues glutamate 163 and tyrosine 273 each coordinate substrate.

This sequence belongs to the AspA/AstE family. Aspartoacylase subfamily. Zn(2+) is required as a cofactor.

It catalyses the reaction an N-acyl-L-aspartate + H2O = a carboxylate + L-aspartate. This Prochlorococcus marinus (strain NATL2A) protein is Probable aspartoacylase.